Reading from the N-terminus, the 521-residue chain is Circadian clock oscillator protein KaiC (521 aa).

KaiC domains follow at residues 1–248 (MNEP…INIF) and 262–521 (ARIS…LDEE). Residues Gly-50, Thr-51, Gly-52, Lys-53, Thr-54, Leu-55, Ser-90, Lys-225, Leu-226, Arg-227, Thr-229, His-231, Thr-241, Thr-291, Gly-292, Thr-293, Gly-294, Lys-295, Thr-296, and Leu-297 each coordinate ATP. Mg(2+) is bound at residue Thr-54. Thr-296 is a Mg(2+) binding site. Mg(2+) is bound at residue Glu-319. Residue Trp-332 participates in ATP binding. A Phosphoserine; by autocatalysis modification is found at Ser-432. Thr-433 carries the phosphothreonine; by autocatalysis modification. ATP-binding residues include Arg-452, Lys-458, Met-459, Arg-460, Ser-462, His-464, and Lys-466.

The protein belongs to the KaiC family. Homohexamer; hexamerization is dependent on ATP-binding. The KaiABC complex composition changes during the circadian cycle to control KaiC phosphorylation. Complexes KaiC(6), KaiA(2-4):KaiC(6), KaiB(6):KaiC(6) and KaiC(6):KaiB(6):KaiA(12) are among the most important forms, many form cooperatively. KaiC interacts with SasA, activating its autokinase function and leading to RpaA activation. Mg(2+) serves as cofactor. In terms of processing, phosphorylated on serine and threonine residues by autocatalysis. Has a 4 step phosphorylation cycle; the autokinase acts first on Thr-433, then Ser-432. When Ser-432 is modified KaiC switches to an autophosphatase mode, acting first on phospho-Thr-433 then phospho-Ser-432.

The enzyme catalyses L-seryl-[protein] + ATP = O-phospho-L-seryl-[protein] + ADP + H(+). It catalyses the reaction L-threonyl-[protein] + ATP = O-phospho-L-threonyl-[protein] + ADP + H(+). It carries out the reaction ATP + H2O = ADP + phosphate + H(+). With respect to regulation, the interaction with KaiA enhances its phosphorylation status, while the interaction with KaiB decreases it. Its function is as follows. Central component of the KaiABC oscillator complex, which constitutes the main circadian regulator in cyanobacteria. Complex composition changes during the circadian cycle to control KaiC phosphorylation. KaiA stimulates KaiC autophosphorylation, while KaiB sequesters KaiA, leading to KaiC autodephosphorylation. Clock output pathways impact the RpaA transcriptional regulator. KaiC enhances the autophosphorylation activity of SasA, which then transfers its phosphate group to RpaA to activate it. KaiB and KaiC together enhance the phospho-RpaA dephosphatase activity of CikA. Has a weak, temperature-independent ATPase activity; ATPase activity defines the circadian period. The phosphorylation state of KaiC modulates its ATPase activity and effects KaiB binding. The polypeptide is Circadian clock oscillator protein KaiC (Rippkaea orientalis (strain PCC 8801 / RF-1) (Cyanothece sp. (strain PCC 8801))).